Here is a 95-residue protein sequence, read N- to C-terminus: Feather keratin B-4 (95 aa).

Residue Ser1 is modified to N-acetylserine.

Belongs to the avian keratin family. The avian keratins (F-ker, S-ker, C-ker and B-ker) are a complex mixture of very similar polypeptides.

In Columba livia (Rock dove), this protein is Feather keratin B-4.